Consider the following 346-residue polypeptide: GTPase Obg (346 aa).

The Obg domain maps to Met-1 to Ile-159. The OBG-type G domain occupies Ala-160 to Asp-327. GTP-binding positions include Gly-166 to Ser-173, Phe-191 to Asn-195, Asp-212 to Gly-215, Ser-279 to Asp-282, and Ser-308 to Ala-310. Residues Ser-173 and Thr-193 each contribute to the Mg(2+) site.

It belongs to the TRAFAC class OBG-HflX-like GTPase superfamily. OBG GTPase family. In terms of assembly, monomer. Mg(2+) serves as cofactor.

It localises to the cytoplasm. In terms of biological role, an essential GTPase which binds GTP, GDP and possibly (p)ppGpp with moderate affinity, with high nucleotide exchange rates and a fairly low GTP hydrolysis rate. Plays a role in control of the cell cycle, stress response, ribosome biogenesis and in those bacteria that undergo differentiation, in morphogenesis control. This chain is GTPase Obg, found in Methylocella silvestris (strain DSM 15510 / CIP 108128 / LMG 27833 / NCIMB 13906 / BL2).